The sequence spans 473 residues: MSSSPTESEILPKESHNSIDEQSQQPANTDTLVKDNSFNEQDDQEVDNDYKSNDEPVQSQDPISPNMASNESGNSENTSNYGSSRDENVYQKTTLWMGELEPWVTEAFIQQVWNTLGKAVKVKLIRNRYTGMNAGYCFVEFASPHEASSAMSMNNKPIPGTNHLFKLNWASGGGLREKSISKASEYSIFVGDLSPNVNEFDVYSLFASRYNSCKSAKIMTDPQTNVSRGYGFVRFTDENDQKSALAEMQGQICGDRPIRVGLATPKSKAHVFSPVNVVPVSMPPVGFYSAAQPVPQFADTANSTVFVGGLSKFVSEEELKYLFQNFGEIVYVKIPPGKGCGFVQFVNRQSAEIAINQLQGYPLGNSRIRLSWGRNQNPIAAPALNYQSQVSQTTIPATSLFPAMSLPPQAQFSPYPAVAPSPLALQTRGAPIGMEISIGSPALVPDQMHIPENGNSDTMPVPNTQGKHLSAEE.

The disordered stretch occupies residues 1-86 (MSSSPTESEI…NTSNYGSSRD (86 aa)). A compositionally biased stretch (basic and acidic residues) spans 10–19 (ILPKESHNSI). 2 stretches are compositionally biased toward polar residues: residues 20–39 (DEQS…NSFN) and 55–68 (EPVQ…PNMA). S64 is subject to Phosphoserine. The segment covering 69-83 (SNESGNSENTSNYGS) has biased composition (low complexity). 3 RRM domains span residues 95 to 165 (LWMG…NHLF), 188 to 260 (IFVG…PIRV), and 305 to 370 (VFVG…RIRL). The segment at 448 to 473 (MHIPENGNSDTMPVPNTQGKHLSAEE) is disordered. Residues 453–467 (NGNSDTMPVPNTQGK) are compositionally biased toward polar residues.

This is an uncharacterized protein from Schizosaccharomyces pombe (strain 972 / ATCC 24843) (Fission yeast).